A 256-amino-acid chain; its full sequence is MTLELTPIPCLTDNYAWLWHDTATDTVVVVDVPEAAPVLKVLTDRRWQLHHILITHHHADHIAGVEALAQATGAKVAGAAADAHRLPPLDHPVAPGDVLHLGMEAAQVIAADGHTLGHIAWYLPGAGLLFSGDSLMSWGCGRLFEGTPAQMFDTLTRLAALPPETRVCSGHEYTAANGRFALSLEPGNGRLHDRMDRVTALRLAGEPSLPVTLGEERATNPFLRADDAALRAALGLPGDAAPLAVFTAARARKDRF.

His56, His58, Asp60, His61, His114, Asp133, and His171 together coordinate Zn(2+).

It belongs to the metallo-beta-lactamase superfamily. Glyoxalase II family. As to quaternary structure, monomer. It depends on Zn(2+) as a cofactor.

The catalysed reaction is an S-(2-hydroxyacyl)glutathione + H2O = a 2-hydroxy carboxylate + glutathione + H(+). Its pathway is secondary metabolite metabolism; methylglyoxal degradation; (R)-lactate from methylglyoxal: step 2/2. Its function is as follows. Thiolesterase that catalyzes the hydrolysis of S-D-lactoyl-glutathione to form glutathione and D-lactic acid. This is Hydroxyacylglutathione hydrolase from Rhodobacter capsulatus (Rhodopseudomonas capsulata).